Here is a 337-residue protein sequence, read N- to C-terminus: Holliday junction branch migration complex subunit RuvB (337 aa).

The disordered stretch occupies residues 1–20 (MQTRFVSPVNHDEEQDEPSV). The interval 1–181 (MQTRFVSPVN…FGIILRLDLY (181 aa)) is large ATPase domain (RuvB-L). Residues Arg21, Gly62, Lys65, Thr66, Thr67, 128 to 130 (EDY), Arg171, Tyr181, and Arg218 contribute to the ATP site. Mg(2+) is bound at residue Thr66. The segment at 182 to 252 (DPSELTVIVT…IANTALFALG (71 aa)) is small ATPAse domain (RuvB-S). Residues 255–337 (QKGLDILDRR…SHTRDLTSFL (83 aa)) form a head domain (RuvB-H) region. DNA contacts are provided by Arg310 and Arg315.

It belongs to the RuvB family. Homohexamer. Forms an RuvA(8)-RuvB(12)-Holliday junction (HJ) complex. HJ DNA is sandwiched between 2 RuvA tetramers; dsDNA enters through RuvA and exits via RuvB. An RuvB hexamer assembles on each DNA strand where it exits the tetramer. Each RuvB hexamer is contacted by two RuvA subunits (via domain III) on 2 adjacent RuvB subunits; this complex drives branch migration. In the full resolvosome a probable DNA-RuvA(4)-RuvB(12)-RuvC(2) complex forms which resolves the HJ.

The protein resides in the cytoplasm. The catalysed reaction is ATP + H2O = ADP + phosphate + H(+). In terms of biological role, the RuvA-RuvB-RuvC complex processes Holliday junction (HJ) DNA during genetic recombination and DNA repair, while the RuvA-RuvB complex plays an important role in the rescue of blocked DNA replication forks via replication fork reversal (RFR). RuvA specifically binds to HJ cruciform DNA, conferring on it an open structure. The RuvB hexamer acts as an ATP-dependent pump, pulling dsDNA into and through the RuvAB complex. RuvB forms 2 homohexamers on either side of HJ DNA bound by 1 or 2 RuvA tetramers; 4 subunits per hexamer contact DNA at a time. Coordinated motions by a converter formed by DNA-disengaged RuvB subunits stimulates ATP hydrolysis and nucleotide exchange. Immobilization of the converter enables RuvB to convert the ATP-contained energy into a lever motion, pulling 2 nucleotides of DNA out of the RuvA tetramer per ATP hydrolyzed, thus driving DNA branch migration. The RuvB motors rotate together with the DNA substrate, which together with the progressing nucleotide cycle form the mechanistic basis for DNA recombination by continuous HJ branch migration. Branch migration allows RuvC to scan DNA until it finds its consensus sequence, where it cleaves and resolves cruciform DNA. The polypeptide is Holliday junction branch migration complex subunit RuvB (Methanospirillum hungatei JF-1 (strain ATCC 27890 / DSM 864 / NBRC 100397 / JF-1)).